The following is a 207-amino-acid chain: Recombination protein RecR (207 aa).

The C4-type zinc finger occupies 60–75; sequence CRHCHNISDSDVCTIC. The region spanning 83-178 is the Toprim domain; that stretch reads STLCVVENIR…RVSVIARGIA (96 aa).

The protein belongs to the RecR family.

Its function is as follows. May play a role in DNA repair. It seems to be involved in an RecBC-independent recombinational process of DNA repair. It may act with RecF and RecO. The chain is Recombination protein RecR from Porphyromonas gingivalis (strain ATCC BAA-308 / W83).